The following is a 517-amino-acid chain: Pseudaminic acid cytidylyltransferase and UDP-2,4-diacetamido-2,4,6-trideoxy-beta-L-altropyranose hydrolase (517 aa).

The segment at M1 to I208 is pseudaminic acid cytidylyltransferase. Residues A209–I517 form a UDP-2,4-diacetamido-2,4,6-trideoxy-beta-L-altropyranose hydrolase region. Catalysis depends on H244, which acts as the Proton acceptor; for UDP-2,4-diacetamido-2,4,6-trideoxy-beta-L-altropyranose hydrolase activity.

In the N-terminal section; belongs to the CMP-NeuNAc synthase family. This sequence in the C-terminal section; belongs to the PseG family. As to quaternary structure, monomer. The cofactor is Mg(2+).

The catalysed reaction is UDP-2,4-diacetamido-2,4,6-trideoxy-beta-L-altrose + H2O = 2,4-diacetamido-2,4,6-trideoxy-beta-L-altrose + UDP + H(+). The enzyme catalyses pseudaminate + CTP = CMP-pseudaminate + diphosphate. Functionally, catalyzes the fourth and sixth steps in the biosynthesis of pseudaminic acid, a sialic-acid-like sugar that is used to modify flagellin. The C-terminus mediates the fourth step of the pathway and catalyzes the removal of UDP from C-1 of UDP-2,4-diacetamido-2,4,6-trideoxy-beta-L-altropyranose forming 2,4-diacetamido-2,4,6-trideoxy-beta-L-altropyranose. The N-terminal part mediates the last step of the pathway by mediating activation of pseudaminic acid with CMP by forming CMP-pseudaminic acid. The protein is Pseudaminic acid cytidylyltransferase and UDP-2,4-diacetamido-2,4,6-trideoxy-beta-L-altropyranose hydrolase of Helicobacter pylori (strain ATCC 700392 / 26695) (Campylobacter pylori).